Here is a 111-residue protein sequence, read N- to C-terminus: Large ribosomal subunit protein bL21 (111 aa).

This sequence belongs to the bacterial ribosomal protein bL21 family. In terms of assembly, part of the 50S ribosomal subunit. Contacts protein L20.

Functionally, this protein binds to 23S rRNA in the presence of protein L20. This chain is Large ribosomal subunit protein bL21, found in Thermosynechococcus vestitus (strain NIES-2133 / IAM M-273 / BP-1).